The chain runs to 219 residues: Pyridoxine/pyridoxamine 5'-phosphate oxidase (219 aa).

Residues Arg15–Tyr18 and Lys73 contribute to the substrate site. Residues Arg68–Lys73, Tyr83–Thr84, Arg89, Lys90, and Gln112 each bind FMN. Tyr130, Arg134, and Ser138 together coordinate substrate. Residues Gln147–Ser148 and Trp192 contribute to the FMN site. Arg198–His200 contacts substrate. Arg202 contacts FMN.

The protein belongs to the pyridoxamine 5'-phosphate oxidase family. In terms of assembly, homodimer. FMN is required as a cofactor.

It carries out the reaction pyridoxamine 5'-phosphate + O2 + H2O = pyridoxal 5'-phosphate + H2O2 + NH4(+). The catalysed reaction is pyridoxine 5'-phosphate + O2 = pyridoxal 5'-phosphate + H2O2. It functions in the pathway cofactor metabolism; pyridoxal 5'-phosphate salvage; pyridoxal 5'-phosphate from pyridoxamine 5'-phosphate: step 1/1. Its pathway is cofactor metabolism; pyridoxal 5'-phosphate salvage; pyridoxal 5'-phosphate from pyridoxine 5'-phosphate: step 1/1. Its function is as follows. Catalyzes the oxidation of either pyridoxine 5'-phosphate (PNP) or pyridoxamine 5'-phosphate (PMP) into pyridoxal 5'-phosphate (PLP). The sequence is that of Pyridoxine/pyridoxamine 5'-phosphate oxidase from Acaryochloris marina (strain MBIC 11017).